Reading from the N-terminus, the 49-residue chain is uncharacterized protein (49 aa).

Residues 17-39 form a helical membrane-spanning segment; that stretch reads LLVFDTSLYIPPFMLSFIGYSLS.

The protein localises to the membrane. This is an uncharacterized protein from Saccharomyces cerevisiae (strain ATCC 204508 / S288c) (Baker's yeast).